The chain runs to 103 residues: Small ribosomal subunit protein uS10 (103 aa).

Belongs to the universal ribosomal protein uS10 family. Part of the 30S ribosomal subunit.

Involved in the binding of tRNA to the ribosomes. This Shewanella denitrificans (strain OS217 / ATCC BAA-1090 / DSM 15013) protein is Small ribosomal subunit protein uS10.